The chain runs to 364 residues: Phosphoserine aminotransferase (364 aa).

An L-glutamate-binding site is contributed by Arg-46. Pyridoxal 5'-phosphate contacts are provided by residues 80–81 (AR), Trp-106, Thr-157, Asp-176, and Gln-199. Lys-200 carries the post-translational modification N6-(pyridoxal phosphate)lysine. A pyridoxal 5'-phosphate-binding site is contributed by 241 to 242 (NT).

Belongs to the class-V pyridoxal-phosphate-dependent aminotransferase family. SerC subfamily. In terms of assembly, homodimer. The cofactor is pyridoxal 5'-phosphate.

The protein resides in the cytoplasm. It catalyses the reaction O-phospho-L-serine + 2-oxoglutarate = 3-phosphooxypyruvate + L-glutamate. It carries out the reaction 4-(phosphooxy)-L-threonine + 2-oxoglutarate = (R)-3-hydroxy-2-oxo-4-phosphooxybutanoate + L-glutamate. Its pathway is amino-acid biosynthesis; L-serine biosynthesis; L-serine from 3-phospho-D-glycerate: step 2/3. The protein operates within cofactor biosynthesis; pyridoxine 5'-phosphate biosynthesis; pyridoxine 5'-phosphate from D-erythrose 4-phosphate: step 3/5. In terms of biological role, catalyzes the reversible conversion of 3-phosphohydroxypyruvate to phosphoserine and of 3-hydroxy-2-oxo-4-phosphonooxybutanoate to phosphohydroxythreonine. The protein is Phosphoserine aminotransferase of Vibrio vulnificus (strain YJ016).